The following is a 1620-amino-acid chain: ABC-type organic anion transporter ABCA8B (1620 aa).

7 helical membrane passes run 30-50 (SLME…YPHG), 223-243 (FFIF…SINV), 267-287 (SWGL…ALVI), 298-318 (FMVV…LAFL), 326-346 (SVLT…LGFT), 352-372 (LPAP…TLGM), and 396-416 (LIIA…ALMM). The ABC transporter 1 domain maps to 479-714 (IRIRNISKEY…WGVGYHLSLQ (236 aa)). Position 515–522 (515–522 (GHSGAGKS)) interacts with ATP. A glycan (N-linked (GlcNAc...) asparagine) is linked at asparagine 723. The next 8 membrane-spanning stretches (helical) occupy residues 860-880 (TLLS…FENI), 979-999 (CFPV…KPSA), 1023-1043 (TAFW…SSVT), 1069-1089 (MVDI…DYLF), 1105-1125 (IPCS…ISFI), 1135-1155 (IWSL…LLAF), 1164-1184 (IIFL…LHLF), and 1194-1214 (VIEP…FIFT). The region spanning 1283–1516 (LRKEYAGKQK…FGKDYLLEMK (234 aa)) is the ABC transporter 2 domain. 1321 to 1328 (GHNGAGKS) contacts ATP.

Belongs to the ABC transporter superfamily. ABCA family. Expressed in heart, brain, lung, liver and skeletal muscle. Highly expressed in the liver, and is also abundant in heart and skeletal muscle. Highly expressed in liver.

It localises to the cell membrane. The protein localises to the basolateral cell membrane. It carries out the reaction taurocholate(in) + ATP + H2O = taurocholate(out) + ADP + phosphate + H(+). The catalysed reaction is cholesterol(in) + ATP + H2O = cholesterol(out) + ADP + phosphate + H(+). Cholesterol efflux is increased by extracellularly applied taurocholate. Functionally, mediates cholesterol and taurocholate efflux. Through the interaction with ABCA1 potentiates the cholesterol efflux to lipid-free APOA1, in turn regulates high-density lipoprotein cholesterol levels. The chain is ABC-type organic anion transporter ABCA8B from Mus musculus (Mouse).